We begin with the raw amino-acid sequence, 121 residues long: Small ribosomal subunit protein uS13 (121 aa).

Positions 94–121 (GLPLRGQRTRTNARTRKGPRKAGVALKK) are disordered.

This sequence belongs to the universal ribosomal protein uS13 family. Part of the 30S ribosomal subunit. Forms a loose heterodimer with protein S19. Forms two bridges to the 50S subunit in the 70S ribosome.

Its function is as follows. Located at the top of the head of the 30S subunit, it contacts several helices of the 16S rRNA. In the 70S ribosome it contacts the 23S rRNA (bridge B1a) and protein L5 of the 50S subunit (bridge B1b), connecting the 2 subunits; these bridges are implicated in subunit movement. Contacts the tRNAs in the A and P-sites. This Ralstonia nicotianae (strain ATCC BAA-1114 / GMI1000) (Ralstonia solanacearum) protein is Small ribosomal subunit protein uS13.